Consider the following 277-residue polypeptide: 4-hydroxy-tetrahydrodipicolinate reductase (277 aa).

Residues 11–16 and 110–112 contribute to the NAD(+) site; these read GALGRM and GTT. The active-site Proton donor/acceptor is histidine 166. Histidine 167 contributes to the (S)-2,3,4,5-tetrahydrodipicolinate binding site. Lysine 170 acts as the Proton donor in catalysis. 176–177 serves as a coordination point for (S)-2,3,4,5-tetrahydrodipicolinate; that stretch reads GT.

Belongs to the DapB family.

It is found in the cytoplasm. The enzyme catalyses (S)-2,3,4,5-tetrahydrodipicolinate + NAD(+) + H2O = (2S,4S)-4-hydroxy-2,3,4,5-tetrahydrodipicolinate + NADH + H(+). It carries out the reaction (S)-2,3,4,5-tetrahydrodipicolinate + NADP(+) + H2O = (2S,4S)-4-hydroxy-2,3,4,5-tetrahydrodipicolinate + NADPH + H(+). It participates in amino-acid biosynthesis; L-lysine biosynthesis via DAP pathway; (S)-tetrahydrodipicolinate from L-aspartate: step 4/4. Catalyzes the conversion of 4-hydroxy-tetrahydrodipicolinate (HTPA) to tetrahydrodipicolinate. The chain is 4-hydroxy-tetrahydrodipicolinate reductase from Synechococcus sp. (strain CC9605).